The following is a 166-amino-acid chain: Deoxyuridine 5'-triphosphate nucleotidohydrolase (166 aa).

The segment at 1–24 (MACVNEPSPKLQKLDRNGIHGDSS) is disordered. Glu138 contributes to the Mg(2+) binding site.

It belongs to the dUTPase family. Homotrimer. Requires Mg(2+) as cofactor.

It carries out the reaction dUTP + H2O = dUMP + diphosphate + H(+). It participates in pyrimidine metabolism; dUMP biosynthesis; dUMP from dCTP (dUTP route): step 2/2. In terms of biological role, this enzyme is involved in nucleotide metabolism: it produces dUMP, the immediate precursor of thymidine nucleotides and it decreases the intracellular concentration of dUTP, preventing uracil incorporation into DNA. The protein is Deoxyuridine 5'-triphosphate nucleotidohydrolase (DUT) of Arabidopsis thaliana (Mouse-ear cress).